Here is a 704-residue protein sequence, read N- to C-terminus: Meprin A subunit beta (704 aa).

The N-terminal stretch at 1–20 (MDARHWPWFLVFATFLLVSG) is a signal peptide. Positions 21-64 (LPAPEKFVKDIDGGIDQDIFDINEDLGLDLFEGDIKLEASGRNS) are excised as a propeptide. Residues 21–654 (LPAPEKFVKD…RCEKRGSTKD (634 aa)) lie on the Extracellular side of the membrane. The Peptidase M12A domain occupies 63–257 (NSIIGDNYRW…LKLNQLYSCT (195 aa)). 3 cysteine pairs are disulfide-bonded: cysteine 104/cysteine 256, cysteine 125/cysteine 145, and cysteine 266/cysteine 428. Histidine 153 contacts Zn(2+). The active site involves glutamate 154. Histidine 157 and histidine 163 together coordinate Zn(2+). N-linked (GlcNAc...) asparagine glycans are attached at residues asparagine 193, asparagine 219, asparagine 316, asparagine 422, asparagine 437, asparagine 528, asparagine 547, and asparagine 592. In terms of domain architecture, MAM spans 261-430 (SFMDSCDFEL…INLSETRCPH (170 aa)). The region spanning 431-585 (HIWHIQNFTQ…GDDVYILLTV (155 aa)) is the MATH domain. The EGF-like domain occupies 607–647 (VHNACSEVECQNGGICTLQEGRAECKCPAGEDWWYMGKRCE). Intrachain disulfides connect cysteine 611–cysteine 622, cysteine 616–cysteine 631, and cysteine 633–cysteine 646. The chain crosses the membrane as a helical span at residues 655-678 (TIVIAVSSTVTVFAVMLIITLISV). The Cytoplasmic segment spans residues 679–704 (YCTRRKYRKKASAKTAAMNLENQHAF). At threonine 693 the chain carries Phosphothreonine.

In terms of assembly, homotetramer consisting of disulfide-linked beta subunits, or heterotetramer of two alpha and two beta subunits formed by non-covalent association of two disulfide-linked heterodimers. Interacts with MBL2 through its carbohydrate moiety. This interaction may inhibit its catalytic activity. Interacts with TSPAN8. The cofactor is Zn(2+). Post-translationally, N-glycosylated; contains high mannose and/or complex biantennary structures. Proteolytically activated by trypsin in the intestinal lumen and kallikrein-related peptidases in other tissues. In terms of processing, phosphorylated by PKC at multiple sites of its cytoplasmic part. Phosphorylation dcreases activity at the cell surface, leading to diminished substrate cleavage. Kidney, intestinal brush borders and salivary ducts.

It localises to the cell membrane. The protein resides in the secreted. It catalyses the reaction Hydrolysis of proteins, including azocasein, and peptides. Hydrolysis of 5-His-|-Leu-6, 6-Leu-|-Cys-7, 14-Ala-|-Leu-15 and 19-Cys-|-Gly-20 bonds in insulin B chain.. With respect to regulation, strongly inhibited by fetuin-A/AHSG. In terms of biological role, membrane metallopeptidase that sheds many membrane-bound proteins. Exhibits a strong preference for acidic amino acids at the P1' position. Known substrates include: FGF19, VGFA, IL1B, IL18, procollagen I and III, E-cadherin, KLK7, gastrin, ADAM10, tenascin-C. The presence of several pro-inflammatory cytokine among substrates implicate MEP1B in inflammation. It is also involved in tissue remodeling due to its capability to degrade extracellular matrix components. The sequence is that of Meprin A subunit beta (Mep1b) from Rattus norvegicus (Rat).